The following is a 984-amino-acid chain: Zinc finger and BTB domain-containing protein 4 (984 aa).

Positions 30–131 (CDVTLIAGDT…IYSARLALPG (102 aa)) constitute a BTB domain. Lys40 is covalently cross-linked (Glycyl lysine isopeptide (Lys-Gly) (interchain with G-Cter in SUMO2)). Disordered regions lie at residues 71–104 (TGGS…PPRV), 172–210 (MVTS…RRPF), and 227–262 (THEA…ASAL). The segment covering 74 to 88 (SAPSPATTTAASSSS) has biased composition (low complexity). Residues 165–324 (VPPAPSSMVT…CRYCEKVFAL (160 aa)) are interaction with CBFA2T3. A C2H2-type 1; atypical zinc finger spans residues 210–232 (FPCPRCGKSFIHPKRLQTHEAQC). Positions 242–255 (AGLGPGGSGPGGPA) are enriched in gly residues. 3 consecutive C2H2-type zinc fingers follow at residues 285–307 (YVCA…SNVH), 313–335 (YPCR…EVWH), and 341–364 (YQCI…RAFH). Ser367 carries the phosphoserine modification. The interval 461–575 (GSSSSGAAGG…GSSQLQAPPP (115 aa)) is disordered. Gly residues predominate over residues 467-477 (AAGGGPVGTGG). Composition is skewed to low complexity over residues 478–488 (SQAASVITYTT) and 507–529 (ATPT…ATAT). Residue Lys548 forms a Glycyl lysine isopeptide (Lys-Gly) (interchain with G-Cter in SUMO2) linkage. A compositionally biased stretch (gly residues) spans 552-565 (GVSGSGGSPTGTGR). A Glycyl lysine isopeptide (Lys-Gly) (interchain with G-Cter in SUMO2) cross-link involves residue Lys590. 5 disordered regions span residues 593–696 (ISET…GERR), 713–734 (RKHQ…RSST), 756–836 (QRHA…VAGG), 853–876 (GGSR…ASEG), and 947–984 (QTAP…GDVG). The segment covering 604 to 627 (SGEEVEESEEEEEEEEEEDQEDQE) has biased composition (acidic residues). The span at 628–637 (ESKAGGEDQL) shows a compositional bias: basic and acidic residues. C2H2-type zinc fingers lie at residues 697–719 (HRCG…QEAH) and 736–758 (FTCP…GQRH). A phosphothreonine; by HIPK2 mark is found at Thr766 and Thr768. Residues 807–819 (AAAAAAEASESAS) are compositionally biased toward low complexity. A compositionally biased stretch (pro residues) spans 948 to 966 (TAPPTPPTPPPPLPLPVPP). Residue Thr955 is modified to Phosphothreonine; by HIPK2.

Interacts with HIPK2. Interacts with CBFA2T3. Interacts with ZBTB38. Phosphorylated by HIPK2. This phosphorylation reduces stability and triggers ZBTB4 protein degradation in response to DNA damage.

Its subcellular location is the nucleus. It is found in the chromosome. Its function is as follows. Transcriptional repressor with bimodal DNA-binding specificity. Represses transcription in a methyl-CpG-dependent manner. Binds with a higher affinity to methylated CpG dinucleotides in the consensus sequence 5'-CGCG-3' but can also bind to the non-methylated consensus sequence 5'-CTGCNA-3' also known as the consensus kaiso binding site (KBS). Can also bind specifically to a single methyl-CpG pair and can bind hemimethylated DNA but with a lower affinity compared to methylated DNA. Plays a role in postnatal myogenesis, may be involved in the regulation of satellite cells self-renewal. The sequence is that of Zinc finger and BTB domain-containing protein 4 (Zbtb4) from Rattus norvegicus (Rat).